The primary structure comprises 135 residues: Large ribosomal subunit protein eL27y (135 aa).

The protein belongs to the eukaryotic ribosomal protein eL27 family.

This is Large ribosomal subunit protein eL27y (RPL27B) from Arabidopsis thaliana (Mouse-ear cress).